A 620-amino-acid chain; its full sequence is Glutathione-regulated potassium-efflux system protein KefC (620 aa).

Transmembrane regions (helical) follow at residues 4–24 (HTLI…PIAV), 26–46 (LGLG…PWGL), 54–74 (SILH…GLEL), 90–110 (GALQ…LLGL), 114–134 (VAEL…MQAM), 149–169 (FAVL…IPLL), 178–198 (MGAF…VVLL), 218–238 (VFSA…EEVG), 270–290 (GLLL…GTLI), 294–314 (LRIV…LWLI), 327–347 (WFAV…GAAQ), and 359–379 (SLTL…VILN). The RCK N-terminal domain maps to 399 to 518 (QPRVIIAGFG…AGVEKPERET (120 aa)). Positions 597-620 (GWQGTEEGKHTGNMADEPETKPSS) are disordered.

This sequence belongs to the monovalent cation:proton antiporter 2 (CPA2) transporter (TC 2.A.37) family. KefC subfamily. As to quaternary structure, homodimer. Interacts with the regulatory subunit KefF.

It is found in the cell inner membrane. Pore-forming subunit of a potassium efflux system that confers protection against electrophiles. Catalyzes K(+)/H(+) antiport. This Escherichia coli O17:K52:H18 (strain UMN026 / ExPEC) protein is Glutathione-regulated potassium-efflux system protein KefC.